The following is a 389-amino-acid chain: Putative teichuronic acid biosynthesis glycosyltransferase TuaC (389 aa).

Belongs to the glycosyltransferase group 1 family. Glycosyltransferase 4 subfamily.

Its pathway is cell wall biogenesis; teichuronic acid biosynthesis. In Bacillus subtilis (strain 168), this protein is Putative teichuronic acid biosynthesis glycosyltransferase TuaC (tuaC).